We begin with the raw amino-acid sequence, 229 residues long: Purine nucleoside phosphorylase BB_0467 (229 aa).

Residues His55, Cys91, and His108 each coordinate Zn(2+).

Belongs to the purine nucleoside phosphorylase YfiH/LACC1 family. In terms of assembly, homodimer. Cu(2+) serves as cofactor. Zn(2+) is required as a cofactor.

It catalyses the reaction adenosine + phosphate = alpha-D-ribose 1-phosphate + adenine. It carries out the reaction S-methyl-5'-thioadenosine + phosphate = 5-(methylsulfanyl)-alpha-D-ribose 1-phosphate + adenine. The enzyme catalyses inosine + phosphate = alpha-D-ribose 1-phosphate + hypoxanthine. The catalysed reaction is adenosine + H2O + H(+) = inosine + NH4(+). Functionally, purine nucleoside enzyme that catalyzes the phosphorolysis of adenosine and inosine nucleosides, yielding D-ribose 1-phosphate and the respective free bases, adenine and hypoxanthine. Also catalyzes the phosphorolysis of S-methyl-5'-thioadenosine into adenine and S-methyl-5-thio-alpha-D-ribose 1-phosphate. Also has adenosine deaminase activity. This is Purine nucleoside phosphorylase BB_0467 from Borreliella burgdorferi (strain ATCC 35210 / DSM 4680 / CIP 102532 / B31) (Borrelia burgdorferi).